The following is a 495-amino-acid chain: Potassium voltage-gated channel subfamily A member 1 (495 aa).

Positions 1–30 are disordered; it reads MTVMSGENADEASAAPGHPQDGSYPRQADH. The segment at 1–128 is tetramerization domain; sequence MTVMSGENAD…FYELGEEAME (128 aa). The Cytoplasmic portion of the chain corresponds to 1–164; sequence MTVMSGENAD…LLFEYPESSG (164 aa). Residue serine 23 is modified to Phosphoserine. The chain crosses the membrane as a helical span at residues 165–186; the sequence is PARVIAIVSVMVILISIVIFCL. The Extracellular portion of the chain corresponds to 187–220; it reads ETLPELKDDKDFTGTIHRIDNTTVIYTSNIFTDP. N-linked (GlcNAc...) asparagine glycosylation is present at asparagine 207. Residues 221 to 242 traverse the membrane as a helical segment; it reads FFIVETLCIIWFSFELVVRFFA. The S-palmitoyl cysteine moiety is linked to residue cysteine 243. Residues 243-253 are Cytoplasmic-facing; sequence CPSKTDFFKNI. The helical transmembrane segment at 254-274 threads the bilayer; that stretch reads MNFIDIVAIIPYFITLGTEIA. Over 275-287 the chain is Extracellular; it reads EQEGNQKGEQATS. Residues 288-308 traverse the membrane as a helical; Voltage-sensor segment; it reads LAILRVIRLVRVFRIFKLSRH. Residues 309–323 lie on the Cytoplasmic side of the membrane; that stretch reads SKGLQILGQTLKASM. The tract at residues 310-323 is S4-S5 linker; sequence KGLQILGQTLKASM. Serine 322 carries the phosphoserine; by PKA modification. A helical transmembrane segment spans residues 324 to 345; the sequence is RELGLLIFFLFIGVILFSSAVY. The Extracellular segment spans residues 346–359; that stretch reads FAEAEEAESHFSSI. Residues 360–371 constitute an intramembrane region (helical); it reads PDAFWWAVVSMT. Positions 372–377 match the Selectivity filter motif; it reads TVGYGD. Residues 372–379 lie within the membrane without spanning it; sequence TVGYGDMY. Topologically, residues 380–386 are extracellular; it reads PVTIGGK. A helical transmembrane segment spans residues 387-415; it reads IVGSLCAIAGVLTIALPVPVIVSNFNYFY. At 416 to 495 the chain is on the cytoplasmic side; the sequence is HRETEGEEQA…VNKSKLLTDV (80 aa). Phosphoserine occurs at positions 437 and 439. A Phosphoserine; by PKA modification is found at serine 446. A PDZ-binding motif is present at residues 493 to 495; sequence TDV.

Belongs to the potassium channel family. A (Shaker) (TC 1.A.1.2) subfamily. Kv1.1/KCNA1 sub-subfamily. Homotetramer and heterotetramer with other channel-forming alpha subunits, such as KCNA2, KCNA4, KCNA5, KCNA6 and KCNA7. Channel activity is regulated by interaction with the beta subunits KCNAB1 and KCNAB2. Identified in a complex with KCNA2 and KCNAB2. Interacts (via C-terminus) with the PDZ domains of DLG1, DLG2 and DLG4. Interacts with LGI1 within a complex containing LGI1, KCNA4 and KCNAB1. Interacts (via cytoplasmic N-terminal domain) with KCNRG; this inhibits channel activity. Interacts with ANK3; this inhibits channel activity. Interacts (via N-terminus) with STX1A; this promotes channel inactivation. Interacts (via N-terminus) with the heterodimer formed by GNB1 and GNG2; this promotes channel inactivation. Can interact simultaneously with STX1A and the heterodimer formed by GNB1 and GNG2. Interacts with ADAM11. Post-translationally, palmitoylated on Cys-243; which may be required for membrane targeting. N-glycosylated. In terms of processing, phosphorylated on tyrosine residues. Phosphorylation increases in response to NRG1; this inhibits channel activity. Phosphorylated by PKA. Phosphorylation at Ser-446 regulates channel activity by down-regulating expression at the cell membrane. In terms of tissue distribution, detected in hippocampus, in the middle third of the molecular layer of the dentate gyrus and in stratum radiatum and stratum oriens. Detected in the mossy fiber zone in the hippocampus CA3 region, at or near axon terminals. Detected in brain cortex, at basket cell terminals. Detected adjacent to nodes of Ranvier in juxtaparanodal zones in spinal cord nerve fibers, but also in paranodal regions in some myelinated spinal cord axons. Detected in juxtaparanodal regions adjacent to the nodes of Ranvier in myelinated axons in cerebellar white matter. Detected in sensory neurons. Detected in neurons from the medial nucleus of the trapezoid body. Detected in basolateral amygdala. Detected in the paraventricular nucleus of the hypothalamus. Detected in the islet of Langerhans (at protein level).

It is found in the cell membrane. The protein resides in the membrane. It localises to the cell projection. The protein localises to the axon. Its subcellular location is the cytoplasmic vesicle. It is found in the perikaryon. The protein resides in the endoplasmic reticulum. It localises to the dendrite. The protein localises to the cell junction. Its subcellular location is the synapse. It is found in the presynapse. The protein resides in the presynaptic cell membrane. The catalysed reaction is K(+)(in) = K(+)(out). With respect to regulation, inhibited by 4-aminopyridine (4-AP) and by tetraethylammonium (TEA). Inhibited by kaliotoxin (KTX). Its function is as follows. Voltage-gated potassium channel that mediates transmembrane potassium transport in excitable membranes, primarily in the brain and the central nervous system, but also in the kidney. Contributes to the regulation of the membrane potential and nerve signaling, and prevents neuronal hyperexcitability. Forms tetrameric potassium-selective channels through which potassium ions pass in accordance with their electrochemical gradient. The channel alternates between opened and closed conformations in response to the voltage difference across the membrane. Can form functional homotetrameric channels and heterotetrameric channels that contain variable proportions of KCNA1, KCNA2, KCNA4, KCNA5, KCNA6, KCNA7, and possibly other family members as well; channel properties depend on the type of alpha subunits that are part of the channel. Channel properties are modulated by cytoplasmic beta subunits that regulate the subcellular location of the alpha subunits and promote rapid inactivation of delayed rectifier potassium channels. In vivo, membranes probably contain a mixture of heteromeric potassium channel complexes, making it difficult to assign currents observed in intact tissues to any particular potassium channel family member. Homotetrameric KCNA1 forms a delayed-rectifier potassium channel that opens in response to membrane depolarization, followed by slow spontaneous channel closure. In contrast, a heterotetrameric channel formed by KCNA1 and KCNA4 shows rapid inactivation. Regulates neuronal excitability in hippocampus, especially in mossy fibers and medial perforant path axons, preventing neuronal hyperexcitability. Response to toxins that are selective for KCNA1, respectively for KCNA2, suggests that heteromeric potassium channels composed of both KCNA1 and KCNA2 play a role in pacemaking and regulate the output of deep cerebellar nuclear neurons. May function as down-stream effector for G protein-coupled receptors and inhibit GABAergic inputs to basolateral amygdala neurons. May contribute to the regulation of neurotransmitter release, such as gamma-aminobutyric acid (GABA) release. Plays a role in regulating the generation of action potentials and preventing hyperexcitability in myelinated axons of the vagus nerve, and thereby contributes to the regulation of heart contraction. Required for normal neuromuscular responses. Regulates the frequency of neuronal action potential firing in response to mechanical stimuli, and plays a role in the perception of pain caused by mechanical stimuli, but does not play a role in the perception of pain due to heat stimuli. Required for normal responses to auditory stimuli and precise location of sound sources, but not for sound perception. The use of toxins that block specific channels suggest that it contributes to the regulation of the axonal release of the neurotransmitter dopamine. Required for normal postnatal brain development and normal proliferation of neuronal precursor cells in the brain. Plays a role in the reabsorption of Mg(2+) in the distal convoluted tubules in the kidney and in magnesium ion homeostasis, probably via its effect on the membrane potential. The sequence is that of Potassium voltage-gated channel subfamily A member 1 from Rattus norvegicus (Rat).